The sequence spans 126 residues: Glycine cleavage system H protein (126 aa).

The Lipoyl-binding domain maps to 21–103 (TVTIGISEHA…YEGGWIVKVK (83 aa)). Lys62 carries the post-translational modification N6-lipoyllysine.

This sequence belongs to the GcvH family. The glycine cleavage system is composed of four proteins: P, T, L and H. It depends on (R)-lipoate as a cofactor.

In terms of biological role, the glycine cleavage system catalyzes the degradation of glycine. The H protein shuttles the methylamine group of glycine from the P protein to the T protein. This chain is Glycine cleavage system H protein, found in Vibrio parahaemolyticus serotype O3:K6 (strain RIMD 2210633).